We begin with the raw amino-acid sequence, 966 residues long: Insulin-degrading enzyme-like 2 (966 aa).

H71 serves as a coordination point for Zn(2+). Residue E74 is the Proton acceptor of the active site. Residue H75 participates in Zn(2+) binding. E145 is an active-site residue. E152 contacts Zn(2+).

It belongs to the peptidase M16 family. It depends on Zn(2+) as a cofactor.

The polypeptide is Insulin-degrading enzyme-like 2 (Arabidopsis thaliana (Mouse-ear cress)).